The primary structure comprises 282 residues: MLPLLRCVPRVLGSSVAGLRAAAPASPFRQLLQPAPRLCTRPFGLLSVRAGSERRPGLLRPRGPCACGCGCGSLHTDGDKAFVDFLSDEIKEERKIQKHKTLPKMSGGWELELNGTEAKLVRKVAGEKITVTFNINNSIPPTFDGEEEPSQGQKVEEQEPELTSTPNFVVEVIKNDDGKKALVLDCHYPEDEVGQEDEAESDIFSIREVSFQSTGESEWKDTNYTLNTDSLDWALYDHLMDFLADRGVDNTFADELVELSTALEHQEYITFLEDLKSFVKSQ.

A mitochondrion-targeting transit peptide spans 1–73; sequence MLPLLRCVPR…PCACGCGCGS (73 aa). The tract at residues 76–93 is C1q binding; the sequence is TDGDKAFVDFLSDEIKEE. The residue at position 87 (Ser87) is a Phosphoserine. Lys91 carries the N6-acetyllysine modification. The disordered stretch occupies residues 138 to 164; it reads SIPPTFDGEEEPSQGQKVEEQEPELTS. The tract at residues 168–213 is interaction with MAVS; the sequence is FVVEVIKNDDGKKALVLDCHYPEDEVGQEDEAESDIFSIREVSFQS. Residue Tyr188 is modified to Phosphotyrosine. 2 positions are modified to phosphoserine: Ser201 and Ser205. Thr214 carries the phosphothreonine modification.

Belongs to the MAM33 family. In terms of assembly, homotrimer; three monomers form a donut-shaped structure with an unusually asymmetric charge distribution on the surface. Interacts with CDK13, HRK, VTN, NFYB, ADRA1B, FOXC1, DDX21, DDX50, NCL, SRSF1, SRSF9 and CDKN2A isoform smARF. Interacts with CD93; the association may represent a cell surface C1q receptor. Interacts with KRT1; the association represents a cell surface kininogen receptor. Interacts with CD209; the interaction is indicative for a C1q:C1QBP:CD209 signaling complex. Interacts with FBL and RRP1; the respective interactions with C1QBP are competitive. Probably associates with the mitoribosome. Interacts with MAVS; the interaction occurs upon viral transfection. Interacts with PPIF. Interacts with U2AF1L4. Interacts with PLEKHN1. Interacts with VGF-derived peptide TLQP-21. Interacts with POLGARF which is produced from an alternative reading frame of the POLG gene; the interaction results in nucleolar localization of C1QBP, probably due to prevention of C1QBP maturation and redirection from mitochondria to nucleoli. Interacts with MRE11 and RAD50; forming the MRC (MRE11-RAD50-C1QBP) complex that inhibits the activity of MRE11. (Microbial infection) Interacts with Rubella virus capsid protein; the interaction occurs in mitochondria. Interacts with Rubella virus protease/methyltransferase p150. As to quaternary structure, (Microbial infection) Interacts with Staphylococcus aureus protein A/spa. In terms of assembly, (Microbial infection) Interacts with Staphylococcus aureus protein A/spa, HIV-1 Tat and HCV core protein. (Microbial infection) Interacts with HIV-1 Tat and HCV core protein. As to quaternary structure, (Microbial infection) Interacts with L.monocytogenes internalin B. In terms of assembly, (Microbial infection) Interacts with Epstein-Barr virus EBNA1. As to expression, expressed on cell surface of peripheral blood cells (at protein level); Surface expression is reported for macrophages and monocyte-derived dendritic cells.

The protein resides in the mitochondrion matrix. It localises to the nucleus. Its subcellular location is the nucleolus. The protein localises to the cell membrane. It is found in the secreted. The protein resides in the cytoplasm. Its function is as follows. Multifunctional and multicompartmental protein involved in inflammation and infection processes, ribosome biogenesis, protein synthesis in mitochondria, regulation of apoptosis, transcriptional regulation and pre-mRNA splicing. At the cell surface is thought to act as an endothelial receptor for plasma proteins of the complement and kallikrein-kinin cascades. Putative receptor for C1q; specifically binds to the globular 'heads' of C1q thus inhibiting C1; may perform the receptor function through a complex with C1qR/CD93. In complex with cytokeratin-1/KRT1 is a high affinity receptor for kininogen-1/HMWK. Can also bind other plasma proteins, such as coagulation factor XII leading to its autoactivation. May function to bind initially fluid kininogen-1 to the cell membrane. The secreted form may enhance both extrinsic and intrinsic coagulation pathways. It is postulated that the cell surface form requires docking with transmembrane proteins for downstream signaling which might be specific for a cell-type or response. By acting as C1q receptor is involved in chemotaxis of immature dendritic cells and neutrophils and is proposed to signal through CD209/DC-SIGN on immature dendritic cells, through integrin alpha-4/beta-1 during trophoblast invasion of the decidua, and through integrin beta-1 during endothelial cell adhesion and spreading. Signaling involved in inhibition of innate immune response is implicating the PI3K-AKT/PKB pathway. Required for protein synthesis in mitochondria. In mitochondrial translation may be involved in formation of functional 55S mitoribosomes; the function seems to involve its RNA-binding activity. Acts as a RNA modification reader, which specifically recognizes and binds mitochondrial RNAs modified by C5-methylcytosine (m5C) in response to stress, and promotes recruitment of the mitochondrial degradosome complex, leading to their degradation. May be involved in the nucleolar ribosome maturation process; the function may involve the exchange of FBL for RRP1 in the association with pre-ribosome particles. Involved in regulation of RNA splicing by inhibiting the RNA-binding capacity of SRSF1 and its phosphorylation. Is required for the nuclear translocation of splicing factor U2AF1L4. Involved in regulation of CDKN2A- and HRK-mediated apoptosis. Stabilizes mitochondrial CDKN2A isoform smARF. May be involved in regulation of FOXC1 transcriptional activity and NFY/CCAAT-binding factor complex-mediated transcription. May play a role in antibacterial defense as it can bind to cell surface hyaluronan and inhibit Streptococcus pneumoniae hyaluronate lyase. May be involved in modulation of the immune response; ligation by HCV core protein is resulting in suppression of interleukin-12 production in monocyte-derived dendritic cells. Involved in regulation of antiviral response by inhibiting RIGI- and IFIH1-mediated signaling pathways probably involving its association with MAVS after viral infection. Acts as a regulator of DNA repair via homologous recombination by inhibiting the activity of MRE11: interacts with unphosphorylated MRE11 and RAD50 in absence of DNA damage, preventing formation and activity of the MRN complex. Following DNA damage, dissociates from phosphorylated MRE11, allowing formation of the MRN complex. Functionally, (Microbial infection) Involved in HIV-1 replication, presumably by contributing to splicing of viral RNA. (Microbial infection) In infection processes acts as an attachment site for microbial proteins, including Listeria monocytogenes internalin B (InlB) and Staphylococcus aureus protein A. In terms of biological role, (Microbial infection) Involved in replication of Rubella virus. The protein is Complement component 1 Q subcomponent-binding protein, mitochondrial (C1QBP) of Homo sapiens (Human).